The sequence spans 94 residues: DNA-directed RNA polymerase subunit Rpo11 (94 aa).

Belongs to the archaeal Rpo11/eukaryotic RPB11/RPC19 RNA polymerase subunit family. In terms of assembly, part of the RNA polymerase complex.

Its subcellular location is the cytoplasm. It catalyses the reaction RNA(n) + a ribonucleoside 5'-triphosphate = RNA(n+1) + diphosphate. Functionally, DNA-dependent RNA polymerase (RNAP) catalyzes the transcription of DNA into RNA using the four ribonucleoside triphosphates as substrates. The protein is DNA-directed RNA polymerase subunit Rpo11 of Halobacterium salinarum (strain ATCC 700922 / JCM 11081 / NRC-1) (Halobacterium halobium).